Consider the following 449-residue polypeptide: Heterogeneous nuclear ribonucleoprotein H (449 aa).

Residue methionine 1 is modified to N-acetylmethionine. Position 2 is an N-acetylmethionine; in Heterogeneous nuclear ribonucleoprotein H, N-terminally processed (methionine 2). Positions 11–90 (FVVKVRGLPW…RYVEVFKSNN (80 aa)) constitute an RRM 1 domain. Phosphoserine is present on serine 23. Residue lysine 35 forms a Glycyl lysine isopeptide (Lys-Gly) (interchain with G-Cter in SUMO2) linkage. A phosphoserine mark is found at serine 54 and serine 63. Glycyl lysine isopeptide (Lys-Gly) (interchain with G-Cter in SUMO2) cross-links involve residues lysine 87 and lysine 98. The RRM 2 domain maps to 111-188 (GFVRLRGLPF…RYIEIFKSSR (78 aa)). Arginine 233 is subject to Dimethylated arginine; alternate. Arginine 233 bears the Omega-N-methylarginine; alternate mark. The stretch at 234-249 (GAYGGGYGGYDDYNGY) is one 1-1 repeat. The interval 234–433 (GAYGGGYGGY…YGGQSSMSGY (200 aa)) is 2 X 16 AA Gly-rich approximate repeats. A Phosphotyrosine modification is found at tyrosine 246. Positions 289-364 (HCVHMRGLPY…RYVELFLNST (76 aa)) constitute an RRM 3 domain. Serine 310 carries the phosphoserine modification. A run of 3 repeats spans residues 354–372 (HRYVELFLNSTAGASGGAY), 374–392 (HRYVELFLNSTAGASGGAY), and 418–433 (GGYGGGYGGQSSMSGY). The tract at residues 354–392 (HRYVELFLNSTAGASGGAYEHRYVELFLNSTAGASGGAY) is 2 X 19 AA perfect repeats.

In terms of assembly, part of a ternary complex containing FUBP2, PTBP1, PTBP2 and HNRNPH1. Identified in the spliceosome C complex. Interacts with IGF2BP1. Interacts with CUGBP1; the interaction is RNA-dependent. Interacts with MBNL1; the interaction in RNA-independent.

It localises to the nucleus. It is found in the nucleoplasm. This protein is a component of the heterogeneous nuclear ribonucleoprotein (hnRNP) complexes which provide the substrate for the processing events that pre-mRNAs undergo before becoming functional, translatable mRNAs in the cytoplasm. Mediates pre-mRNA alternative splicing regulation. Inhibits, together with CUGBP1, insulin receptor (IR) pre-mRNA exon 11 inclusion in myoblast. Binds to the IR RNA. Binds poly(RG). This Rattus norvegicus (Rat) protein is Heterogeneous nuclear ribonucleoprotein H (Hnrnph1).